Here is a 61-residue protein sequence, read N- to C-terminus: Small venom protein 1 (61 aa).

An N-terminal signal peptide occupies residues 1–20 (MRCVAIFLVVICAFVLQALA).

In terms of tissue distribution, expressed by the venom gland.

Its subcellular location is the secreted. In Pimpla hypochondriaca (Parasitoid wasp), this protein is Small venom protein 1.